The following is a 419-amino-acid chain: Peptide chain release factor subunit 1 (419 aa).

The protein belongs to the eukaryotic release factor 1 family. Heterodimer of two subunits, one of which binds GTP.

Its subcellular location is the cytoplasm. Its function is as follows. Directs the termination of nascent peptide synthesis (translation) in response to the termination codons UAA, UAG and UGA. The chain is Peptide chain release factor subunit 1 from Methanococcus vannielii (strain ATCC 35089 / DSM 1224 / JCM 13029 / OCM 148 / SB).